The sequence spans 139 residues: Transcription antitermination protein NusB (139 aa).

Belongs to the NusB family.

Functionally, involved in transcription antitermination. Required for transcription of ribosomal RNA (rRNA) genes. Binds specifically to the boxA antiterminator sequence of the ribosomal RNA (rrn) operons. This is Transcription antitermination protein NusB from Edwardsiella ictaluri (strain 93-146).